The chain runs to 545 residues: Glucose-6-phosphate isomerase (545 aa).

The active-site Proton donor is the Glu351. Active-site residues include His382 and Lys510.

The protein belongs to the GPI family.

The protein localises to the cytoplasm. The catalysed reaction is alpha-D-glucose 6-phosphate = beta-D-fructose 6-phosphate. Its pathway is carbohydrate biosynthesis; gluconeogenesis. It functions in the pathway carbohydrate degradation; glycolysis; D-glyceraldehyde 3-phosphate and glycerone phosphate from D-glucose: step 2/4. Catalyzes the reversible isomerization of glucose-6-phosphate to fructose-6-phosphate. This is Glucose-6-phosphate isomerase from Shewanella oneidensis (strain ATCC 700550 / JCM 31522 / CIP 106686 / LMG 19005 / NCIMB 14063 / MR-1).